A 247-amino-acid polypeptide reads, in one-letter code: Ubiquinone biosynthesis O-methyltransferase (247 aa).

S-adenosyl-L-methionine-binding residues include Arg39, Gly70, Asp91, and Met134.

This sequence belongs to the methyltransferase superfamily. UbiG/COQ3 family.

The catalysed reaction is a 3-demethylubiquinol + S-adenosyl-L-methionine = a ubiquinol + S-adenosyl-L-homocysteine + H(+). It carries out the reaction a 3-(all-trans-polyprenyl)benzene-1,2-diol + S-adenosyl-L-methionine = a 2-methoxy-6-(all-trans-polyprenyl)phenol + S-adenosyl-L-homocysteine + H(+). It functions in the pathway cofactor biosynthesis; ubiquinone biosynthesis. Its function is as follows. O-methyltransferase that catalyzes the 2 O-methylation steps in the ubiquinone biosynthetic pathway. The protein is Ubiquinone biosynthesis O-methyltransferase of Cereibacter sphaeroides (strain ATCC 17029 / ATH 2.4.9) (Rhodobacter sphaeroides).